The sequence spans 719 residues: Photosystem I P700 chlorophyll a apoprotein A1 (719 aa).

The next 8 helical transmembrane spans lie at 59–82 (IFGA…FHGA), 145–168 (LYCT…FHYH), 184–208 (LNHH…HVSL), 280–298 (TAHH…GHMY), 335–358 (WHAQ…HHMY), 374–400 (LSLF…IFMV), 422–444 (AIIS…LYIH), and 520–538 (FLVH…LILL). 2 residues coordinate [4Fe-4S] cluster: Cys562 and Cys571. The next 2 helical transmembrane spans lie at 578-599 (HVFL…HFSW) and 653-675 (LSAY…MFLF). Position 664 (His664) interacts with chlorophyll a'. Chlorophyll a contacts are provided by Met672 and Tyr680. Trp681 serves as a coordination point for phylloquinone. A helical membrane pass occupies residues 713 to 719 (AVGVTHT).

The protein belongs to the PsaA/PsaB family. In terms of assembly, the PsaA/B heterodimer binds the P700 chlorophyll special pair and subsequent electron acceptors. PSI consists of a core antenna complex that captures photons, and an electron transfer chain that converts photonic excitation into a charge separation. The eukaryotic PSI reaction center is composed of at least 11 subunits. The cofactor is P700 is a chlorophyll a/chlorophyll a' dimer, A0 is one or more chlorophyll a, A1 is one or both phylloquinones and FX is a shared 4Fe-4S iron-sulfur center..

Its subcellular location is the plastid. It is found in the chloroplast thylakoid membrane. It catalyses the reaction reduced [plastocyanin] + hnu + oxidized [2Fe-2S]-[ferredoxin] = oxidized [plastocyanin] + reduced [2Fe-2S]-[ferredoxin]. Its function is as follows. PsaA and PsaB bind P700, the primary electron donor of photosystem I (PSI), as well as the electron acceptors A0, A1 and FX. PSI is a plastocyanin-ferredoxin oxidoreductase, converting photonic excitation into a charge separation, which transfers an electron from the donor P700 chlorophyll pair to the spectroscopically characterized acceptors A0, A1, FX, FA and FB in turn. Oxidized P700 is reduced on the lumenal side of the thylakoid membrane by plastocyanin. In Asplenium nidus (Bird's nest fern), this protein is Photosystem I P700 chlorophyll a apoprotein A1.